A 448-amino-acid polypeptide reads, in one-letter code: Acetate kinase (448 aa).

N7 contributes to the Mg(2+) binding site. K14 contributes to the ATP binding site. Substrate is bound at residue R91. Catalysis depends on D148, which acts as the Proton donor/acceptor. Residues 208–212 (HIGNG) and 283–285 (DRR) contribute to the ATP site. A Mg(2+)-binding site is contributed by E388.

Belongs to the acetokinase family. Homodimer. Mg(2+) is required as a cofactor. Mn(2+) serves as cofactor.

It localises to the cytoplasm. It catalyses the reaction acetate + ATP = acetyl phosphate + ADP. Its pathway is metabolic intermediate biosynthesis; acetyl-CoA biosynthesis; acetyl-CoA from acetate: step 1/2. Catalyzes the formation of acetyl phosphate from acetate and ATP. Can also catalyze the reverse reaction. The chain is Acetate kinase from Treponema pallidum (strain Nichols).